The sequence spans 392 residues: B2 bradykinin receptor (392 aa).

The Extracellular portion of the chain corresponds to 1 to 61 (MPCSWKLLGF…EWWSWLNAIQ (61 aa)). N-linked (GlcNAc...) asparagine glycans are attached at residues N29 and N40. A helical transmembrane segment spans residues 62–85 (APFLWVLFLLAALENLFVLSVFFL). Over 86-94 (HKNSCTVAE) the chain is Cytoplasmic. The chain crosses the membrane as a helical span at residues 95 to 119 (IYLGNLAAADLILACGLPFWAITIA). Residues 120 to 132 (NNFDWVFGEVLCR) lie on the Extracellular side of the membrane. C131 and C212 are disulfide-bonded. The helical transmembrane segment at 133 to 154 (VVNTMIYMNLYSSICFLMLVSI) threads the bilayer. Residues 155 to 176 (DRYLALVKTMSMGRMRGVRWAK) are Cytoplasmic-facing. Y157 is subject to Phosphotyrosine. The chain crosses the membrane as a helical span at residues 177 to 199 (LYSLVIWGCTLLLSSPMLVFRTM). Over 200–222 (REYSEEGHNVTACVIVYPSRSWE) the chain is Extracellular. N-linked (GlcNAc...) asparagine glycosylation is present at N208. The chain crosses the membrane as a helical span at residues 223–249 (VFTNVLLNLVGFLLPLSVITFCTVRIL). Residues 250–268 (QVLRNNEMKKFKEVQTERK) are Cytoplasmic-facing. A helical membrane pass occupies residues 269–293 (ATVLVLAVLGLFVLCWVPFQISTFL). Topologically, residues 294 to 312 (DTLLRLGVLSGCWDEHAVD) are extracellular. Residues 313–336 (VITQISSYVAYSNSGLNPLVYVIV) form a helical membrane-spanning segment. Residues 337–392 (GKRFRKKSREVYRVLCQKGGCMGEPVQMENSMGTLRTSISVERQIHKLQDWAGKKQ) are Cytoplasmic-facing. A Phosphotyrosine modification is found at Y348. C352 carries the S-palmitoyl cysteine lipid modification. The residue at position 367 (S367) is a Phosphoserine. T370 bears the Phosphothreonine mark. S374 and S376 each carry phosphoserine; by GRK6.

This sequence belongs to the G-protein coupled receptor 1 family. Bradykinin receptor subfamily. BDKRB2 sub-subfamily. Forms a complex with PECAM1 and GNAQ. Interacts with PECAM1.

Its subcellular location is the cell membrane. Receptor for bradykinin. It is associated with G proteins that activate a phosphatidylinositol-calcium second messenger system. The polypeptide is B2 bradykinin receptor (Bdkrb2) (Mus musculus (Mouse)).